We begin with the raw amino-acid sequence, 287 residues long: AA9 family lytic polysaccharide monooxygenase D (287 aa).

The first 17 residues, 1–17, serve as a signal peptide directing secretion; the sequence is MKLSLLAAAAIAPMVSA. Residue His18 coordinates Cu(2+). A disulfide bridge links Cys67 with Cys189. Position 176 (His176) interacts with O2. Residue Tyr186 coordinates Cu(2+). N-linked (GlcNAc...) asparagine glycosylation is found at Asn220 and Asn250. The tract at residues 239–287 is disordered; that stretch reads TGGSGSSTGSYNESNAEDSNEYPYQKESGTCQSNFYRREHARDFSHRRA. Over residues 274–287 the composition is skewed to basic and acidic residues; that stretch reads YRREHARDFSHRRA.

Belongs to the polysaccharide monooxygenase AA9 family. The cofactor is Cu(2+).

It localises to the secreted. The catalysed reaction is [(1-&gt;4)-beta-D-glucosyl]n+m + reduced acceptor + O2 = 4-dehydro-beta-D-glucosyl-[(1-&gt;4)-beta-D-glucosyl]n-1 + [(1-&gt;4)-beta-D-glucosyl]m + acceptor + H2O.. In terms of biological role, lytic polysaccharide monooxygenase (LPMO) that depolymerizes crystalline and amorphous polysaccharides via the oxidation of scissile alpha- or beta-(1-4)-glycosidic bonds, yielding C1 oxidation products. Catalysis by LPMOs requires the reduction of the active-site copper from Cu(II) to Cu(I) by a reducing agent and H(2)O(2) or O(2) as a cosubstrate. Active on celluloseas as well as on the hemicellulose xyloglucan. Shows synergy with other hydrolases in degrading sorghum stover. This chain is AA9 family lytic polysaccharide monooxygenase D, found in Emericella nidulans (strain FGSC A4 / ATCC 38163 / CBS 112.46 / NRRL 194 / M139) (Aspergillus nidulans).